The following is a 71-amino-acid chain: Equinin B (71 aa).

Positions methionine 1–glycine 11 are cleaved as a signal peptide. A propeptide spanning residues glycine 46–tyrosine 71 is cleaved from the precursor.

In terms of processing, contains 4 disulfide bonds.

Its subcellular location is the secreted. The protein localises to the target cell membrane. Its function is as follows. Antimicrobial peptide with inhibitory activity against both Gram-positive and Gram-negative bacteria (E.coli (MIC=0.25 ug/ml), M.lysodeikticus (MIC=0.25 ug/ml), and V.alginolyticus (MIC=0.25 ug/ml)). Does not show hemolytic activity. The chain is Equinin B from Actinia equina (Beadlet anemone).